The primary structure comprises 381 residues: Erythronate-4-phosphate dehydrogenase (381 aa).

S45 and T66 together coordinate substrate. NAD(+) is bound by residues D146, T174, 205 to 207 (ASR), and D231. The active site involves R207. E236 is an active-site residue. Catalysis depends on H253, which acts as the Proton donor. G256 is an NAD(+) binding site. Residue Y257 participates in substrate binding.

Belongs to the D-isomer specific 2-hydroxyacid dehydrogenase family. PdxB subfamily. In terms of assembly, homodimer.

Its subcellular location is the cytoplasm. It catalyses the reaction 4-phospho-D-erythronate + NAD(+) = (R)-3-hydroxy-2-oxo-4-phosphooxybutanoate + NADH + H(+). It participates in cofactor biosynthesis; pyridoxine 5'-phosphate biosynthesis; pyridoxine 5'-phosphate from D-erythrose 4-phosphate: step 2/5. Catalyzes the oxidation of erythronate-4-phosphate to 3-hydroxy-2-oxo-4-phosphonooxybutanoate. The sequence is that of Erythronate-4-phosphate dehydrogenase from Stutzerimonas stutzeri (strain A1501) (Pseudomonas stutzeri).